The primary structure comprises 793 residues: Flavin carrier protein 1 (793 aa).

A signal peptide spans 1–21; it reads MQVLVTLWCLICTCLVLPVAA. The Lumenal portion of the chain corresponds to 22–163; the sequence is KKRTLTASSL…FFSNGKTVSQ (142 aa). N-linked (GlcNAc...) asparagine glycosylation is present at N143. The chain crosses the membrane as a helical span at residues 164 to 184; it reads IGVKWVTAVIAGIGLLTSAVL. Over 185–194 the chain is Cytoplasmic; that stretch reads STFGNSTAAS. A helical transmembrane segment spans residues 195 to 215; it reads HISANTMSLFLYFQSVAVVAM. At 216–223 the chain is on the lumenal side; it reads QHVDSVPP. The chain crosses the membrane as a helical span at residues 224 to 244; the sequence is IAAAWSENLAWSMGLIRITFM. Residues 245–249 lie on the Cytoplasmic side of the membrane; that stretch reads QKIFR. The chain crosses the membrane as a helical span at residues 250–272; the sequence is WYVEATGGSASLYLTATTMSVLT. Residues 273-317 are Lumenal-facing; sequence QRGLDYLKNTSVYKRAENVLYGNSNTLIFRGIKRMGYRMKIENTA. N-linked (GlcNAc...) asparagine glycosylation is present at N281. The chain crosses the membrane as a helical span at residues 318–338; sequence IVCTGFTFFVLCGYFLAGFIM. Residues 339-372 are Cytoplasmic-facing; it reads ACKYSIELCIRCGWMRSDRFYQFRKNWRSVLKGS. The chain crosses the membrane as a helical span at residues 373 to 393; sequence LLRYIYIGFTQLTILSFWEFT. The Lumenal portion of the chain corresponds to 394–397; sequence ERDS. Residues 398–418 traverse the membrane as a helical segment; sequence AGVIVIACLFIVLSCGLMAWA. Over 419–461 the chain is Cytoplasmic; that stretch reads AYRTIFFASKSVEMYNNPAALLYGDEYVLNKYGFFYTMFNAKH. Residues 462–482 form a helical membrane-spanning segment; that stretch reads YWWNALLTTYILVKALFVGFA. Topologically, residues 483 to 484 are lumenal; sequence QA. The chain crosses the membrane as a helical span at residues 485–505; sequence SGKTQALAIFIIDLAYFVAII. The Cytoplasmic segment spans residues 506–516; the sequence is RYKPYLDRPTN. A helical membrane pass occupies residues 517–537; the sequence is IVNIFICTVTLVNSFLFMFFS. Over 538–551 the chain is Lumenal; the sequence is NLFNQKYAVSAIMG. Residues 552–572 traverse the membrane as a helical segment; it reads WVFFIMNAAFSLLLLLMILAF. Residues 573–793 are Cytoplasmic-facing; it reads TTIILFSKNP…KANILDPDYL (221 aa). At S610 the chain carries Phosphoserine. T626 is subject to Phosphothreonine. Disordered stretches follow at residues 649-674 and 689-731; these read YDDEKTGTNSENAESSSKETTRPTFS and KLGS…QESE. Residues 701 to 719 show a composition bias toward polar residues; that stretch reads ITQQEVSPDRASSSPNSKS. A phosphoserine mark is found at S771 and S774.

This sequence belongs to the transient receptor potential (TRP) ion channel family.

The protein localises to the endoplasmic reticulum membrane. Its function is as follows. May be responsible for the transport of FAD into the endoplasmic reticulum lumen, where it is required for oxidative protein folding. This is Flavin carrier protein 1 (FLC1) from Saccharomyces cerevisiae (strain ATCC 204508 / S288c) (Baker's yeast).